The primary structure comprises 445 residues: Argininosuccinate lyase (445 aa).

This sequence belongs to the lyase 1 family. Argininosuccinate lyase subfamily.

It is found in the cytoplasm. The catalysed reaction is 2-(N(omega)-L-arginino)succinate = fumarate + L-arginine. Its pathway is amino-acid biosynthesis; L-arginine biosynthesis; L-arginine from L-ornithine and carbamoyl phosphate: step 3/3. This is Argininosuccinate lyase from Xylella fastidiosa (strain Temecula1 / ATCC 700964).